We begin with the raw amino-acid sequence, 512 residues long: Sugar transport protein MST7 (512 aa).

Residues 1 to 17 (MENAGAGDGAPKHYPGK) lie on the Cytoplasmic side of the membrane. Residues 18–38 (MTVFVFIACLVASSGGLIFGY) traverse the membrane as a helical segment. Topologically, residues 39-81 (DIGISGGVTSMDPFLSRFFPSVYAKEKEVVDTNQYCKFDSEPL) are extracellular. Residues 82 to 102 (TLFTSSLYLAALIASLFASVI) form a helical membrane-spanning segment. The Cytoplasmic segment spans residues 103–116 (TRKLGRKMTMLGGG). Residues 117-137 (FIFLIGAVLNGAAVNVAMLII) form a helical membrane-spanning segment. Over 138-139 (GR) the chain is Extracellular. Residues 140–160 (ILLGIGVGFSIQAVPLYLSEM) traverse the membrane as a helical segment. The Cytoplasmic portion of the chain corresponds to 161–166 (APAKMR). Residues 167-187 (GMLNIIFQLMITVGILFANLI) form a helical membrane-spanning segment. Residues 188–201 (NYFTDKIAGGWGWR) lie on the Extracellular side of the membrane. Residues 202–222 (VSLGLAAVPAVIMTVGSILLP) form a helical membrane-spanning segment. Residues 223-294 (DTPNSLLSRG…MSVLIPTLQQ (72 aa)) are Cytoplasmic-facing. A helical transmembrane segment spans residues 295–315 (LTGINVVMFYAPVLFKTIGFG). Over 316–320 (GTASL) the chain is Extracellular. A helical transmembrane segment spans residues 321–341 (MSAVITGLVNMFATFVSIATV). Residues 342–347 (DRFGRR) are Cytoplasmic-facing. Residues 348-368 (VLFIQGGIQMIIAQFILGTLI) form a helical membrane-spanning segment. Topologically, residues 369–385 (AVKFGTAGVANISQGYA) are extracellular. The helical transmembrane segment at 386 to 406 (IVVVLFICLFVSAFAWSWGPL) threads the bilayer. The Cytoplasmic segment spans residues 407-425 (GWLVPSEIFPLEIRSAAQS). A helical membrane pass occupies residues 426–446 (VVVVFNMAFTFFIAQIFLMML). Topologically, residues 447–450 (CRLK) are extracellular. Residues 451-471 (FGLFFFFGAMELIMTGFVLVF) form a helical membrane-spanning segment. Topologically, residues 472 to 512 (LPETKGIPIEEMDRIWGEHWYWSRFVGAGRNRVMQMASTNV) are cytoplasmic.

It belongs to the major facilitator superfamily. Sugar transporter (TC 2.A.1.1) family.

It is found in the membrane. In terms of biological role, mediates active uptake of hexoses by sugar:proton symport. This Oryza sativa subsp. japonica (Rice) protein is Sugar transport protein MST7.